A 271-amino-acid polypeptide reads, in one-letter code: Isoprenyl transferase (271 aa).

Asp35 is an active-site residue. A Mg(2+)-binding site is contributed by Asp35. Substrate-binding positions include 36-39 (GNGR), Trp40, Arg48, His52, and 80-82 (STE). The active-site Proton acceptor is the Asn83. Residues Trp84, Arg86, Arg207, and 213 to 215 (RIS) each bind substrate. Glu226 serves as a coordination point for Mg(2+).

It belongs to the UPP synthase family. In terms of assembly, homodimer. The cofactor is Mg(2+).

Functionally, catalyzes the condensation of isopentenyl diphosphate (IPP) with allylic pyrophosphates generating different type of terpenoids. The protein is Isoprenyl transferase of Enterococcus faecalis (strain ATCC 700802 / V583).